The following is a 117-amino-acid chain: Hydrogenase maturation factor HypA (117 aa).

Residue histidine 2 participates in Ni(2+) binding. Residues cysteine 73, cysteine 76, cysteine 89, and cysteine 92 each coordinate Zn(2+).

This sequence belongs to the HypA/HybF family.

Its function is as follows. Involved in the maturation of [NiFe] hydrogenases. Required for nickel insertion into the metal center of the hydrogenase. The protein is Hydrogenase maturation factor HypA of Shewanella baltica (strain OS223).